The following is a 170-amino-acid chain: uncharacterized protein (170 aa).

The next 3 membrane-spanning stretches (helical) occupy residues 6-26, 31-51, and 91-111; these read PFYF…ILLI, LLFI…LIYI, and IYFS…IVAF.

The protein to M.jannaschii MJ1249.1, MJ0210.1 and MJ0785.1.

The protein localises to the cell membrane. This is an uncharacterized protein from Methanocaldococcus jannaschii (strain ATCC 43067 / DSM 2661 / JAL-1 / JCM 10045 / NBRC 100440) (Methanococcus jannaschii).